A 175-amino-acid chain; its full sequence is Crossover junction endodeoxyribonuclease RuvC (175 aa).

Residues aspartate 8, glutamate 68, and aspartate 140 contribute to the active site. The Mg(2+) site is built by aspartate 8, glutamate 68, and aspartate 140.

It belongs to the RuvC family. In terms of assembly, homodimer which binds Holliday junction (HJ) DNA. The HJ becomes 2-fold symmetrical on binding to RuvC with unstacked arms; it has a different conformation from HJ DNA in complex with RuvA. In the full resolvosome a probable DNA-RuvA(4)-RuvB(12)-RuvC(2) complex forms which resolves the HJ. Requires Mg(2+) as cofactor.

It localises to the cytoplasm. The catalysed reaction is Endonucleolytic cleavage at a junction such as a reciprocal single-stranded crossover between two homologous DNA duplexes (Holliday junction).. In terms of biological role, the RuvA-RuvB-RuvC complex processes Holliday junction (HJ) DNA during genetic recombination and DNA repair. Endonuclease that resolves HJ intermediates. Cleaves cruciform DNA by making single-stranded nicks across the HJ at symmetrical positions within the homologous arms, yielding a 5'-phosphate and a 3'-hydroxyl group; requires a central core of homology in the junction. The consensus cleavage sequence is 5'-(A/T)TT(C/G)-3'. Cleavage occurs on the 3'-side of the TT dinucleotide at the point of strand exchange. HJ branch migration catalyzed by RuvA-RuvB allows RuvC to scan DNA until it finds its consensus sequence, where it cleaves and resolves the cruciform DNA. The protein is Crossover junction endodeoxyribonuclease RuvC of Pseudomonas fluorescens (strain Pf0-1).